A 142-amino-acid chain; its full sequence is Hemoglobin larval subunit alpha (142 aa).

Positions 2-142 (VLSAEEKALV…VSAVLTSKYR (141 aa)) constitute a Globin domain. H59 lines the O2 pocket. H88 is a heme b binding site.

It belongs to the globin family. Heterotetramer of two alpha chains and two beta chains. In terms of tissue distribution, red blood cells.

In terms of biological role, involved in oxygen transport from the lung to the various peripheral tissues. The protein is Hemoglobin larval subunit alpha of Pleurodeles waltl (Iberian ribbed newt).